Reading from the N-terminus, the 353-residue chain is Protein RecA (353 aa).

67 to 74 serves as a coordination point for ATP; sequence GPESSGKT.

This sequence belongs to the RecA family.

Its subcellular location is the cytoplasm. Can catalyze the hydrolysis of ATP in the presence of single-stranded DNA, the ATP-dependent uptake of single-stranded DNA by duplex DNA, and the ATP-dependent hybridization of homologous single-stranded DNAs. It interacts with LexA causing its activation and leading to its autocatalytic cleavage. This Chlamydia pneumoniae (Chlamydophila pneumoniae) protein is Protein RecA.